We begin with the raw amino-acid sequence, 331 residues long: Undecaprenyl-phosphate 4-deoxy-4-formamido-L-arabinose transferase (331 aa).

The next 2 membrane-spanning stretches (helical) occupy residues 236 to 256 (LSIV…FLIL) and 270 to 290 (VFPL…GLGL).

The protein belongs to the glycosyltransferase 2 family.

The protein resides in the cell inner membrane. It catalyses the reaction UDP-4-deoxy-4-formamido-beta-L-arabinose + di-trans,octa-cis-undecaprenyl phosphate = 4-deoxy-4-formamido-alpha-L-arabinopyranosyl di-trans,octa-cis-undecaprenyl phosphate + UDP. The protein operates within glycolipid biosynthesis; 4-amino-4-deoxy-alpha-L-arabinose undecaprenyl phosphate biosynthesis; 4-amino-4-deoxy-alpha-L-arabinose undecaprenyl phosphate from UDP-4-deoxy-4-formamido-beta-L-arabinose and undecaprenyl phosphate: step 1/2. Its pathway is bacterial outer membrane biogenesis; lipopolysaccharide biosynthesis. Catalyzes the transfer of 4-deoxy-4-formamido-L-arabinose from UDP to undecaprenyl phosphate. The modified arabinose is attached to lipid A and is required for resistance to polymyxin and cationic antimicrobial peptides. The protein is Undecaprenyl-phosphate 4-deoxy-4-formamido-L-arabinose transferase of Shewanella sediminis (strain HAW-EB3).